Here is a 413-residue protein sequence, read N- to C-terminus: Peptidase T (413 aa).

Histidine 82 contributes to the Zn(2+) binding site. The active site involves aspartate 84. Aspartate 145 serves as a coordination point for Zn(2+). Catalysis depends on glutamate 179, which acts as the Proton acceptor. 3 residues coordinate Zn(2+): glutamate 180, aspartate 202, and histidine 384.

This sequence belongs to the peptidase M20B family. The cofactor is Zn(2+).

The protein localises to the cytoplasm. The enzyme catalyses Release of the N-terminal residue from a tripeptide.. Functionally, cleaves the N-terminal amino acid of tripeptides. In Latilactobacillus sakei subsp. sakei (strain 23K) (Lactobacillus sakei subsp. sakei), this protein is Peptidase T.